The sequence spans 836 residues: Granulocyte colony-stimulating factor receptor (836 aa).

Positions 1–24 are cleaved as a signal peptide; sequence MARLGNCSLTWAALIILLLPGSLE. The Ig-like C2-type domain maps to 25–117; that stretch reads ECGHISVSAP…SLQILDQVEL (93 aa). Residues 25–627 are Extracellular-facing; that stretch reads ECGHISVSAP…TLTPEGSELH (603 aa). Cystine bridges form between Cys26–Cys52 and Cys46–Cys101. Residues Asn51, Asn93, Asn128, and Asn134 are each glycosylated (N-linked (GlcNAc...) asparagine). Fibronectin type-III domains lie at 125 to 230, 233 to 332, 334 to 430, 431 to 528, and 530 to 623; these read IPHN…LEPP, RTMD…TTER, PTVR…SRGP, ALTR…MAPS, and APEL…TPEG. Cystine bridges form between Cys131–Cys142, Cys167–Cys218, Cys177–Cys186, Cys248–Cys295, and Cys266–Cys309. A WSXWS motif motif is present at residues 318 to 322; it reads WSDWS. 4 N-linked (GlcNAc...) asparagine glycosylation sites follow: Asn389, Asn474, Asn579, and Asn610. The helical transmembrane segment at 628–650 threads the bilayer; sequence IILGLFGLLLLLTCLCGTAWLCC. At 651 to 836 the chain is on the cytoplasmic side; it reads SPNRKNPLWP…VHGMEALGSF (186 aa). Residues 658–666 carry the Box 1 motif motif; it reads LWPSVPDPA.

It belongs to the type I cytokine receptor family. Type 2 subfamily. As to quaternary structure, homodimer. The dimeric receptor binds two CSF3 molecules. Interacts with CEACAM1; down-regulates the CSF3R-STAT3 pathway through recruitment of PTPN6 that dephosphorylates CSF3R. N-glycosylated. One or several isoforms have been found in myelogenous leukemia cell line KG-1, leukemia U-937 cell line, in bone marrow cells, placenta, and peripheral blood granulocytes. Isoform GCSFR-2 is found only in leukemia U-937 cells. Isoform GCSFR-3 is highly expressed in placenta.

It is found in the secreted. The protein resides in the cell membrane. Receptor for granulocyte colony-stimulating factor (CSF3), essential for granulocytic maturation. Plays a crucial role in the proliferation, differentiation and survival of cells along the neutrophilic lineage. In addition it may function in some adhesion or recognition events at the cell surface. This Homo sapiens (Human) protein is Granulocyte colony-stimulating factor receptor (CSF3R).